Reading from the N-terminus, the 179-residue chain is tRNA (cytidine(56)-2'-O)-methyltransferase (179 aa).

Residues Leu82, 112 to 116 (GAEKV), and 130 to 137 (VGNQPHSE) each bind S-adenosyl-L-methionine.

The protein belongs to the aTrm56 family. Homodimer.

The protein localises to the cytoplasm. It catalyses the reaction cytidine(56) in tRNA + S-adenosyl-L-methionine = 2'-O-methylcytidine(56) in tRNA + S-adenosyl-L-homocysteine + H(+). Functionally, specifically catalyzes the AdoMet-dependent 2'-O-ribose methylation of cytidine at position 56 in tRNAs. This chain is tRNA (cytidine(56)-2'-O)-methyltransferase, found in Methanococcus maripaludis (strain C6 / ATCC BAA-1332).